The chain runs to 91 residues: Molybdopterin synthase sulfur carrier subunit (91 aa).

Gly91 carries the post-translational modification 1-thioglycine; alternate. Gly91 is subject to Glycyl adenylate; alternate.

It belongs to the MoaD family. MOCS2A subfamily. In terms of assembly, heterotetramer; composed of 2 small (MOCS2A) and 2 large (MOCS2B) subunits. Post-translationally, C-terminal thiocarboxylation occurs in 2 steps, it is first acyl-adenylated (-COAMP) via the hesA/moeB/thiF part of uba4, then thiocarboxylated (-COSH) via the rhodanese domain of uba4.

It localises to the cytoplasm. The protein operates within cofactor biosynthesis; molybdopterin biosynthesis. Functionally, acts as a sulfur carrier required for molybdopterin biosynthesis. Component of the molybdopterin synthase complex that catalyzes the conversion of precursor Z into molybdopterin by mediating the incorporation of 2 sulfur atoms into precursor Z to generate a dithiolene group. In the complex, serves as sulfur donor by being thiocarboxylated (-COSH) at its C-terminus by uba4. After interaction with MOCS2B, the sulfur is then transferred to precursor Z to form molybdopterin. The sequence is that of Molybdopterin synthase sulfur carrier subunit from Emericella nidulans (strain FGSC A4 / ATCC 38163 / CBS 112.46 / NRRL 194 / M139) (Aspergillus nidulans).